A 230-amino-acid polypeptide reads, in one-letter code: Orotidine 5'-phosphate decarboxylase (230 aa).

Substrate-binding positions include D10, K32, 59–68 (DLKYHDIPNT), T119, R180, Q189, G209, and R210. The active-site Proton donor is K61.

The protein belongs to the OMP decarboxylase family. Type 1 subfamily. In terms of assembly, homodimer.

The catalysed reaction is orotidine 5'-phosphate + H(+) = UMP + CO2. It functions in the pathway pyrimidine metabolism; UMP biosynthesis via de novo pathway; UMP from orotate: step 2/2. In terms of biological role, catalyzes the decarboxylation of orotidine 5'-monophosphate (OMP) to uridine 5'-monophosphate (UMP). This chain is Orotidine 5'-phosphate decarboxylase, found in Haemophilus influenzae (strain ATCC 51907 / DSM 11121 / KW20 / Rd).